A 452-amino-acid polypeptide reads, in one-letter code: Glutathione gamma-glutamylcysteinyltransferase 2 (452 aa).

The region spanning 1-220 (MSMASLYRRS…GFMLISRPHR (220 aa)) is the Peptidase C83 domain. Residues 287–315 (EDVNQNLSSEEKSRLKLKQELLKQVQETK) are a coiled coil.

Belongs to the phytochelatin synthase family. As to expression, expressed in shoots, roots, leaves, stems and flowers.

The catalysed reaction is [Glu(-Cys)](n)-Gly + glutathione + H(+) = [Glu(-Cys)](n+1)-Gly + glycine. Its activity is regulated as follows. Requires cadmium for activity. Also activated in heterologous system by AsO(4)(3-) ions, but not by Cu(2+), Zn(2+), Mn(2+) or Ni(2+) ions. In terms of biological role, involved in the synthesis of phytochelatins (PC) and homophytochelatins (hPC), the heavy-metal-binding peptides of plants. In Arabidopsis thaliana (Mouse-ear cress), this protein is Glutathione gamma-glutamylcysteinyltransferase 2 (PCS2).